A 146-amino-acid polypeptide reads, in one-letter code: MPKILVDADACPVKAEIKQVAEHFQLDVIFVASFNHYSVNTNGENWIFVDTGKESADMRMMNLAKKGDIIVTQDIGLASILLAKGTFVFSNRGELYREEEMSLMLDIRYRHAKDRQQGKYSKGPKAMSDQDRSLFKDRLTTFLQNK.

Belongs to the UPF0178 family.

This chain is UPF0178 protein LMOf2365_1475, found in Listeria monocytogenes serotype 4b (strain F2365).